A 552-amino-acid chain; its full sequence is Carboxypeptidase Y homolog A (552 aa).

Positions 1 to 17 (MRVLPATLLVGAATAAT) are cleaved as a signal peptide. The propeptide occupies 18–133 (PAQQVLGGLQ…KLEAYDLRIK (116 aa)). Cystine bridges form between C188-C428, C322-C336, C346-C369, C353-C362, and C391-C398. Residue N219 is glycosylated (N-linked (GlcNAc...) asparagine). S275 is a catalytic residue. Residue D467 is part of the active site. A glycan (N-linked (GlcNAc...) asparagine) is linked at N518. H529 is an active-site residue.

The protein belongs to the peptidase S10 family.

It localises to the vacuole. It carries out the reaction Release of a C-terminal amino acid with broad specificity.. In terms of biological role, vacuolar carboxypeptidase involved in degradation of small peptides. Digests preferentially peptides containing an aliphatic or hydrophobic residue in P1' position, as well as methionine, leucine or phenylalanine in P1 position of ester substrate. The protein is Carboxypeptidase Y homolog A (cpyA) of Emericella nidulans (strain FGSC A4 / ATCC 38163 / CBS 112.46 / NRRL 194 / M139) (Aspergillus nidulans).